Consider the following 693-residue polypeptide: Follicle-stimulating hormone receptor (693 aa).

Residues 1–18 (MFLVFTCSLILLASCSSC) form the signal peptide. Disulfide bonds link Cys18–Cys25 and Cys23–Cys32. The region spanning 19–46 (QHHTCHCAGRIFICQESKVVQLPRDIPT) is the LRRNT domain. Residues 19-366 (QHHTCHCAGR…EDIMGYTILR (348 aa)) lie on the Extracellular side of the membrane. An N-linked (GlcNAc...) asparagine glycan is attached at Asn47. LRR repeat units lie at residues 49-72 (TELRFVLTKMRVIPKGAFAGLLDL), 73-97 (EKIEISQNDALEVIEAKVFSNLPKL), 98-118 (HEIRIEKANNLVYIDQDAFQH), 119-143 (LPSLRYLLISNTGLRFLPVVQKVHS), 144-169 (FQKVLLDIQDNINIRTIERNSFMGLS), 170-192 (SESVILWLNKNGIQEIENHAFNG), 193-216 (TYLDELNLSDNQNLEKLPNEVFQG), 217-240 (ANGPVVLDISRTKISFLPGHGLEL), and 241-259 (IKKLRARSTYNLKKLPDLS). N-linked (GlcNAc...) asparagine glycosylation is found at Asn191 and Asn199. Asn268 is a glycosylation site (N-linked (GlcNAc...) asparagine). Intrachain disulfides connect Cys275–Cys346, Cys276–Cys292, Cys276–Cys356, and Cys292–Cys338. A helical membrane pass occupies residues 367–387 (VLIWFISILAITGNIVVLIIL). The Cytoplasmic portion of the chain corresponds to 388–398 (ISSQYKLTVPR). The chain crosses the membrane as a helical span at residues 399–421 (FLMCNLAFADLCIGIYLLFIASV). At 422–443 (DIQTKSQYYNYAIDWQTGAGCN) the chain is on the extracellular side. A disulfide bridge links Cys442 with Cys517. A helical membrane pass occupies residues 444 to 465 (AAGFFTVFASELSVYTLTVITL). Topologically, residues 466 to 485 (ERWHTITYAMQLDRKVRFRH) are cytoplasmic. A helical transmembrane segment spans residues 486–508 (AVIIMIFGWMFAFTVALLPIFGV). Topologically, residues 509–528 (SSYMKVSICLPMDIETPFSQ) are extracellular. The helical transmembrane segment at 529–550 (AYVIFLLVLNVLAFVIICACYI) threads the bilayer. Over 551 to 573 (CIYFTVRNPNVISSNSDTKIAKR) the chain is Cytoplasmic. A helical membrane pass occupies residues 574–597 (MAILIFTDFLCMAPISFFAISASL). The Extracellular portion of the chain corresponds to 598–608 (KVPLITVSKSK). Residues 609–630 (ILLVLFYPINSCANPFLYAIFT) traverse the membrane as a helical segment. Topologically, residues 631–693 (KTFRRDFFIL…YSLVPLNHLN (63 aa)) are cytoplasmic.

The protein belongs to the G-protein coupled receptor 1 family. FSH/LSH/TSH subfamily. As to quaternary structure, homotrimer. Functions as a homotrimer binding the FSH hormone heterodimer composed of CGA and FSHB.

It is found in the cell membrane. Functionally, g protein-coupled receptor for follitropin, the follicle-stimulating hormone. Through cAMP production activates the downstream PI3K-AKT and ERK1/ERK2 signaling pathways. The polypeptide is Follicle-stimulating hormone receptor (FSHR) (Cairina moschata (Muscovy duck)).